Here is a 145-residue protein sequence, read N- to C-terminus: Actin-depolymerizing factor 11 (145 aa).

Residues 11-145 (SSGIGVAAEC…DIELLRERAH (135 aa)) form the ADF-H domain.

Belongs to the actin-binding proteins ADF family.

Functionally, actin-depolymerizing protein. Severs actin filaments (F-actin) and binds to actin monomers. In Oryza sativa subsp. japonica (Rice), this protein is Actin-depolymerizing factor 11 (ADF11).